Consider the following 436-residue polypeptide: MLLVSPACRGVYLQTIDPKPIDFSARASYALCFQIPTSIPKRECLMRLGTVFCFNQKHREQTSFKKRYVSTQNVDLPPILPKNKKKPYPIPFKQIQEEARKDKKLAQMGIEKQLDPPKNGLLVPNLVPVADQVIDNWKLLIKGLAQLLHVVPVFACSECGAVHVANVGHNIRDCNGPTNSQRRGSHSWVKGTINDVLIPVESYHMYDPFGRRIKHETRFEYERIPALVELCIQAGVEIPEYPCRRRTQPIRMMGKRVIDRGGYHKEPEKPQTSSSLSSPLAELDTLGVFERYPPPTPEDIPKIAQETMDAYEKVRLGVTKLMRKFTVKACGYCSEVHVGPWGHSVKLCGEFKHQWRDGKHGWQDALVDEVFPPNYVWHVRDLKGNPLTGNLRRFYGKAPALVEICMHSGARVPQRYKAMMRLDIIVPDSQEADMVA.

Residues 1–47 constitute a chloroplast transit peptide; the sequence is MLLVSPACRGVYLQTIDPKPIDFSARASYALCFQIPTSIPKRECLMR. 2 APO domains span residues 155-240 and 329-414; these read ACSE…EIPE and ACGY…RVPQ.

Belongs to the APO family. Expressed at low level. Expressed at higher level in leaves. Expressed at lower level in roots, stems, siliques and flowers.

The protein localises to the plastid. The protein resides in the chloroplast. Involved in the stable assembly of several 4Fe-4S cluster-containing complexes of chloroplasts. May participate in 4Fe-4S cofactor incorporation into psaA and/or psaB during translation. The chain is APO protein 1, chloroplastic (APO1) from Arabidopsis thaliana (Mouse-ear cress).